The chain runs to 97 residues: Mitochondrial import inner membrane translocase subunit Tim8 A (97 aa).

The Twin CX3C motif motif lies at 43-66 (CWEKCMDKPGPKLDSRAEACFVNC). 2 disulfides stabilise this stretch: Cys-43–Cys-66 and Cys-47–Cys-62. Ser-57, Ser-87, Ser-94, and Ser-96 each carry phosphoserine.

It belongs to the small Tim family. Heterohexamer; composed of 3 copies of TIMM8A and 3 copies of TIMM13, named soluble 70 kDa complex. Associates with the TIM22 complex, whose core is composed of TIMM22. Highly expressed in fetal and adult brain, followed by fetal lung, liver and kidney. Also expressed in heart, placenta, lung, liver, kidney, pancreas, skeletal muscle and heart.

The protein resides in the mitochondrion inner membrane. In terms of biological role, mitochondrial intermembrane chaperone that participates in the import and insertion of some multi-pass transmembrane proteins into the mitochondrial inner membrane. Also required for the transfer of beta-barrel precursors from the TOM complex to the sorting and assembly machinery (SAM complex) of the outer membrane. Acts as a chaperone-like protein that protects the hydrophobic precursors from aggregation and guide them through the mitochondrial intermembrane space. The TIMM8-TIMM13 complex mediates the import of proteins such as TIMM23, SLC25A12/ARALAR1 and SLC25A13/ARALAR2, while the predominant TIMM9-TIMM10 70 kDa complex mediates the import of much more proteins. Probably necessary for normal neurologic development. This Homo sapiens (Human) protein is Mitochondrial import inner membrane translocase subunit Tim8 A (TIMM8A).